A 198-amino-acid polypeptide reads, in one-letter code: Superoxide dismutase [Mn], mitochondrial (198 aa).

His-26 is a Mn(2+) binding site. Residue Tyr-34 is modified to 3'-nitrotyrosine. N6-acetyllysine; alternate is present on residues Lys-44 and Lys-51. Lys-44 and Lys-51 each carry N6-succinyllysine; alternate. His-74 contributes to the Mn(2+) binding site. Residue Lys-90 is modified to N6-acetyllysine. 2 positions are modified to N6-acetyllysine; alternate: Lys-98 and Lys-106. 2 positions are modified to N6-succinyllysine; alternate: Lys-98 and Lys-106. The Mn(2+) site is built by Asp-159 and His-163. Lys-178 bears the N6-acetyllysine mark.

Belongs to the iron/manganese superoxide dismutase family. As to quaternary structure, homotetramer. The cofactor is Mn(2+). Post-translationally, nitrated under oxidative stress. Nitration coupled with oxidation inhibits the catalytic activity. Acetylation at Lys-98 decreases enzymatic activity. Deacetylated by SIRT3 upon exposure to ionizing radiations or after long fasting. In terms of processing, polyubiquitinated; leading to proteasomal degradation. Deubiquitinated by USP36 which increases protein stability.

Its subcellular location is the mitochondrion matrix. It carries out the reaction 2 superoxide + 2 H(+) = H2O2 + O2. In terms of biological role, destroys superoxide anion radicals which are normally produced within the cells and which are toxic to biological systems. The chain is Superoxide dismutase [Mn], mitochondrial (SOD2) from Pan troglodytes (Chimpanzee).